Consider the following 359-residue polypeptide: UPF0283 membrane protein RHECIAT_CH0002430 (359 aa).

Residues 1 to 50 (MSKPPSDPPRRPPAAFAYEDEASEPRNSGRQQQGRRKPESFSENIVVTPD) are disordered. Helical transmembrane passes span 77–97 (FGKI…GLWT) and 111–131 (LGYA…ALVI).

This sequence belongs to the UPF0283 family.

It localises to the cell inner membrane. In Rhizobium etli (strain CIAT 652), this protein is UPF0283 membrane protein RHECIAT_CH0002430.